The chain runs to 395 residues: Phosphonoacetaldehyde reductase (395 aa).

Positions 199, 268, and 282 each coordinate Fe cation.

The protein belongs to the iron-containing alcohol dehydrogenase family. Requires Fe cation as cofactor.

It carries out the reaction 2-hydroxyethylphosphonate + NAD(+) = phosphonoacetaldehyde + NADH + H(+). It participates in secondary metabolite biosynthesis; bialaphos biosynthesis. Its function is as follows. Catalyzes the reduction of phosphonoacetaldehyde to 2-hydroxyethylphosphonate, a step in the biosynthesis of phosphinothricin tripeptide. Phosphinothricin tripeptide (PTT), also known as bialaphos (BA), is a natural-product antibiotic and potent herbicide. Can use both NAD and NADP but the preferred substrate is NAD. The polypeptide is Phosphonoacetaldehyde reductase (phpC) (Streptomyces viridochromogenes (strain DSM 40736 / JCM 4977 / BCRC 1201 / Tue 494)).